Reading from the N-terminus, the 289-residue chain is Inorganic pyrophosphatase (289 aa).

An N-acetylserine modification is found at Ser-2. Lys-57 is subject to N6-acetyllysine. Residues Asp-116, Asp-121, and Asp-153 each coordinate Mg(2+). Lys-228 carries the N6-acetyllysine modification. Residue Ser-250 is modified to Phosphoserine.

The protein belongs to the PPase family. As to quaternary structure, homodimer. Mg(2+) serves as cofactor.

The protein localises to the cytoplasm. It carries out the reaction diphosphate + H2O = 2 phosphate + H(+). The protein is Inorganic pyrophosphatase (PPA1) of Macaca fascicularis (Crab-eating macaque).